A 106-amino-acid chain; its full sequence is Small ribosomal subunit protein uS10 (106 aa).

This sequence belongs to the universal ribosomal protein uS10 family. In terms of assembly, part of the 30S ribosomal subunit.

Its function is as follows. Involved in the binding of tRNA to the ribosomes. This is Small ribosomal subunit protein uS10 from Solibacter usitatus (strain Ellin6076).